The chain runs to 336 residues: MACMKKALPFILMVLLQIGYAGMDILTKDVLNKGMSIYVLSVYRHGVATVVMAPFAFYFDNPVIAQNLFNLGMKYTTATFAIALYNTLPAVTFILALIFRLESVKFQSIRSAAKVVGTVTTVGGIMVMTLVKGPALDLFWTKGPSAQNTVGTDIHSSIKGAVLVTIGCFSYACFMILQAITLKTYPAELSLATWICLIGTIEGVVVALVMEKGNPSVWAIGWDTKLLTITYSGIVCSALGYYIGGVVMKTRGPVFVTAFKPLCMIVVAIMSSIIFDEQMYLGRALGATVICVGLYLVIWGKAKDYEYPSTPQIDDDLAQATTSKQKEQRRTVIESV.

9 consecutive transmembrane segments (helical) span residues 7-27 (ALPF…DILT), 45-65 (HGVA…PVIA), 79-99 (TFAI…ALIF), 115-135 (VVGT…KGPA), 160-180 (GAVL…LQAI), 189-209 (LSLA…VALV), 227-247 (LTIT…GGVV), 255-275 (FVTA…SIIF), and 279-299 (MYLG…LVIW). 2 EamA domains span residues 63 to 126 (VIAQ…GGIM) and 169 to 298 (FSYA…YLVI).

It belongs to the drug/metabolite transporter (DMT) superfamily. Plant drug/metabolite exporter (P-DME) (TC 2.A.7.4) family.

The protein resides in the membrane. In Arabidopsis thaliana (Mouse-ear cress), this protein is WAT1-related protein At2g37450.